Reading from the N-terminus, the 582-residue chain is DNA repair and recombination protein radC (582 aa).

A DNA-binding region spans residues 146 to 150 (KRALR). Over residues 194-204 (KKEPMRVKPSL) the composition is skewed to basic and acidic residues. 3 disordered regions span residues 194 to 226 (KKEPMRVKPSLEDDDLPPNPSIAGRNTSTNSAA), 310 to 400 (QIPN…INGQ), and 485 to 582 (APSG…QHQH). The span at 326-335 (QNQYTNQRQS) shows a compositional bias: polar residues. The segment covering 516–529 (AAAQNNTAAANRMA) has biased composition (low complexity).

It belongs to the RAD52 family. As to quaternary structure, part of a complex that includes RAD51, RAD52 and RAD59.

It localises to the nucleus. In terms of biological role, involved in DNA double-strand break (DSB) repair and recombination. Promotes the annealing of complementary single-stranded DNA and by stimulation of the RAD51 recombinase. This chain is DNA repair and recombination protein radC (radC), found in Emericella nidulans (strain FGSC A4 / ATCC 38163 / CBS 112.46 / NRRL 194 / M139) (Aspergillus nidulans).